We begin with the raw amino-acid sequence, 155 residues long: Alanine- and arginine-rich domain-containing protein (155 aa).

The polypeptide is Alanine- and arginine-rich domain-containing protein (AARD) (Homo sapiens (Human)).